The following is a 405-amino-acid chain: 3-hydroxy-3-methylglutaryl-coenzyme A reductase (405 aa).

Catalysis depends on charge relay system residues glutamate 101 and aspartate 305. Histidine 400 acts as the Proton donor in catalysis.

This sequence belongs to the HMG-CoA reductase family. As to quaternary structure, homodimer.

It localises to the cytoplasm. The enzyme catalyses (R)-mevalonate + 2 NADP(+) + CoA = (3S)-3-hydroxy-3-methylglutaryl-CoA + 2 NADPH + 2 H(+). Its pathway is metabolic intermediate biosynthesis; (R)-mevalonate biosynthesis; (R)-mevalonate from acetyl-CoA: step 3/3. Its activity is regulated as follows. Is competitively inhibited by lovastatin (formerly called mevinolin). Lovastatin also blocks the growth of H.salinarum, and this effect is reversed by addition of mevalonate, indicating the critical role that the mevalonate pathway plays in isoprenoid biosynthesis by these archaea. In terms of biological role, catalyzes the NADPH-dependent reductive deacylation of (S)-3-hydroxy-3-methylglutaryl-CoA (HMG-CoA) to (R)-mevalonate. Cannot use NADH instead of NADPH. Functions in the mevalonate (MVA) pathway leading to isopentenyl diphosphate (IPP), a key precursor for the biosynthesis of isoprenoid compounds such as archaeal membrane lipids. The protein is 3-hydroxy-3-methylglutaryl-coenzyme A reductase (hmgA) of Halobacterium salinarum (strain ATCC 29341 / DSM 671 / R1).